Reading from the N-terminus, the 397-residue chain is Elongation factor Tu (397 aa).

The region spanning 10–206 (KPHVNIGTIG…AVDESIPEPQ (197 aa)) is the tr-type G domain. The segment at 19 to 26 (GHIDHGKT) is G1. Residue 19-26 (GHIDHGKT) participates in GTP binding. Threonine 26 is a binding site for Mg(2+). A G2 region spans residues 62-66 (GITIS). Positions 83–86 (DCPG) are G3. Residues 83-87 (DCPGH) and 138-141 (NKAD) each bind GTP. The G4 stretch occupies residues 138-141 (NKAD). Residues 176-178 (SAL) form a G5 region.

This sequence belongs to the TRAFAC class translation factor GTPase superfamily. Classic translation factor GTPase family. EF-Tu/EF-1A subfamily. In terms of assembly, monomer.

It localises to the cytoplasm. The catalysed reaction is GTP + H2O = GDP + phosphate + H(+). In terms of biological role, GTP hydrolase that promotes the GTP-dependent binding of aminoacyl-tRNA to the A-site of ribosomes during protein biosynthesis. The polypeptide is Elongation factor Tu (Frankia casuarinae (strain DSM 45818 / CECT 9043 / HFP020203 / CcI3)).